Reading from the N-terminus, the 317-residue chain is Methionyl-tRNA formyltransferase (317 aa).

112 to 115 lines the (6S)-5,6,7,8-tetrahydrofolate pocket; that stretch reads SILP.

The protein belongs to the Fmt family.

It catalyses the reaction L-methionyl-tRNA(fMet) + (6R)-10-formyltetrahydrofolate = N-formyl-L-methionyl-tRNA(fMet) + (6S)-5,6,7,8-tetrahydrofolate + H(+). Its function is as follows. Attaches a formyl group to the free amino group of methionyl-tRNA(fMet). The formyl group appears to play a dual role in the initiator identity of N-formylmethionyl-tRNA by promoting its recognition by IF2 and preventing the misappropriation of this tRNA by the elongation apparatus. The polypeptide is Methionyl-tRNA formyltransferase (Mannheimia succiniciproducens (strain KCTC 0769BP / MBEL55E)).